A 416-amino-acid polypeptide reads, in one-letter code: Pectin acetylesterase 3 (416 aa).

An N-terminal signal peptide occupies residues 1-25 (MKSVLRIAAAIFWLWLFIVLGVIGS). Asn131 is a glycosylation site (N-linked (GlcNAc...) asparagine). Residues Ser198 and Asp294 each act as charge relay system in the active site. A glycan (N-linked (GlcNAc...) asparagine) is linked at Asn324. The active-site Charge relay system is His361.

It belongs to the pectinacetylesterase family.

The protein resides in the secreted. It is found in the cell wall. Functionally, hydrolyzes acetyl esters in homogalacturonan regions of pectin. In type I primary cell wall, galacturonic acid residues of pectin can be acetylated at the O-2 and O-3 positions. Decreasing the degree of acetylation of pectin gels in vitro alters their physical properties. The polypeptide is Pectin acetylesterase 3 (Arabidopsis thaliana (Mouse-ear cress)).